A 165-amino-acid polypeptide reads, in one-letter code: Transmembrane protein 128 (165 aa).

The next 4 helical transmembrane spans lie at Asn49–Phe69, Trp81–Val101, Leu119–Trp139, and Phe144–Leu164.

The protein localises to the membrane. This Homo sapiens (Human) protein is Transmembrane protein 128 (TMEM128).